An 83-amino-acid polypeptide reads, in one-letter code: uncharacterized protein (83 aa).

This is an uncharacterized protein from Escherichia coli (strain K12).